Here is a 460-residue protein sequence, read N- to C-terminus: tRNA(Ile)-lysidine synthase (460 aa).

37-42 (SGGADS) contributes to the ATP binding site.

It belongs to the tRNA(Ile)-lysidine synthase family.

The protein resides in the cytoplasm. The enzyme catalyses cytidine(34) in tRNA(Ile2) + L-lysine + ATP = lysidine(34) in tRNA(Ile2) + AMP + diphosphate + H(+). Its function is as follows. Ligates lysine onto the cytidine present at position 34 of the AUA codon-specific tRNA(Ile) that contains the anticodon CAU, in an ATP-dependent manner. Cytidine is converted to lysidine, thus changing the amino acid specificity of the tRNA from methionine to isoleucine. This is tRNA(Ile)-lysidine synthase from Treponema denticola (strain ATCC 35405 / DSM 14222 / CIP 103919 / JCM 8153 / KCTC 15104).